A 91-amino-acid polypeptide reads, in one-letter code: Large ribosomal subunit protein uL22 (91 aa).

It belongs to the universal ribosomal protein uL22 family. In terms of assembly, part of the 50S ribosomal subunit.

Functionally, this protein binds specifically to 23S rRNA; its binding is stimulated by other ribosomal proteins, e.g. L4, L17, and L20. It is important during the early stages of 50S assembly. It makes multiple contacts with different domains of the 23S rRNA in the assembled 50S subunit and ribosome. In terms of biological role, the globular domain of the protein is located near the polypeptide exit tunnel on the outside of the subunit, while an extended beta-hairpin is found that lines the wall of the exit tunnel in the center of the 70S ribosome. This chain is Large ribosomal subunit protein uL22 (rplV), found in Ash yellows phytoplasma.